A 139-amino-acid chain; its full sequence is Protein archease (139 aa).

Positions 12, 138, and 139 each coordinate Ca(2+).

Belongs to the archease family.

Its function is as follows. Activates the tRNA-splicing ligase complex by facilitating the enzymatic turnover of catalytic subunit RtcB. Acts by promoting the guanylylation of RtcB, a key intermediate step in tRNA ligation. Can also alter the NTP specificity of RtcB such that ATP, dGTP or ITP is used efficiently. The chain is Protein archease from Saccharolobus islandicus (strain L.S.2.15 / Lassen #1) (Sulfolobus islandicus).